The following is a 105-amino-acid chain: uncharacterized protein (105 aa).

This is an uncharacterized protein from Escherichia coli (strain K12).